The chain runs to 172 residues: Large ribosomal subunit protein uL10 (172 aa).

This sequence belongs to the universal ribosomal protein uL10 family. Part of the ribosomal stalk of the 50S ribosomal subunit. The N-terminus interacts with L11 and the large rRNA to form the base of the stalk. The C-terminus forms an elongated spine to which L12 dimers bind in a sequential fashion forming a multimeric L10(L12)X complex.

Forms part of the ribosomal stalk, playing a central role in the interaction of the ribosome with GTP-bound translation factors. The sequence is that of Large ribosomal subunit protein uL10 from Rhizobium leguminosarum bv. trifolii (strain WSM2304).